The chain runs to 518 residues: Protein FAM98A (518 aa).

2 disordered regions span residues 300–415 (GRVP…GHSS) and 434–518 (GSGY…HYTS). The segment covering 302 to 311 (VPDRGGRPNE) has biased composition (basic and acidic residues). Composition is skewed to gly residues over residues 349–364 (GGRG…GGRG), 383–396 (WTDG…GYQD), and 405–415 (QPGGYHGGHSS). Positions 447–459 (RYQDGGHHGDRGG) are enriched in basic and acidic residues. Residues 460-484 (GRGGRGGRGGRGGRAGQGGGWGGRG) show a composition bias toward gly residues. Residues 488-504 (YHQGGQFEQHFQHGGYQ) are compositionally biased toward low complexity. Positions 505 to 518 (YNHSGFGQGRHYTS) are enriched in polar residues.

The protein belongs to the FAM98 family. As to quaternary structure, interacts (via N- and C-terminus) with DDX1. Interacts (via N- and C-terminus) with C14orf166. Interacts with FAM98B. Interacts with PLEKHM1 (via N- and C-terminus).

Its function is as follows. Positively stimulates PRMT1-induced protein arginine methylation. Involved in skeletal homeostasis. Positively regulates lysosome peripheral distribution and ruffled border formation in osteoclasts. The protein is Protein FAM98A of Pongo abelii (Sumatran orangutan).